We begin with the raw amino-acid sequence, 338 residues long: Ketol-acid reductoisomerase (NADP(+)) (338 aa).

The region spanning 2 to 182 (TKMYYEEDTD…GGARAGVLET (181 aa)) is the KARI N-terminal Rossmann domain. Residues 25–28 (YGSQ), Ser-51, Ser-53, and 83–86 (DELQ) each bind NADP(+). The active site involves His-108. Gly-134 contacts NADP(+). Positions 183–330 (TFRTETETDL…SEIRKLYCWN (148 aa)) constitute a KARI C-terminal knotted domain. The Mg(2+) site is built by Asp-191, Glu-195, Glu-227, and Glu-231. Residue Ser-252 coordinates substrate.

Belongs to the ketol-acid reductoisomerase family. Mg(2+) is required as a cofactor.

The catalysed reaction is (2R)-2,3-dihydroxy-3-methylbutanoate + NADP(+) = (2S)-2-acetolactate + NADPH + H(+). It catalyses the reaction (2R,3R)-2,3-dihydroxy-3-methylpentanoate + NADP(+) = (S)-2-ethyl-2-hydroxy-3-oxobutanoate + NADPH + H(+). It functions in the pathway amino-acid biosynthesis; L-isoleucine biosynthesis; L-isoleucine from 2-oxobutanoate: step 2/4. The protein operates within amino-acid biosynthesis; L-valine biosynthesis; L-valine from pyruvate: step 2/4. Functionally, involved in the biosynthesis of branched-chain amino acids (BCAA). Catalyzes an alkyl-migration followed by a ketol-acid reduction of (S)-2-acetolactate (S2AL) to yield (R)-2,3-dihydroxy-isovalerate. In the isomerase reaction, S2AL is rearranged via a Mg-dependent methyl migration to produce 3-hydroxy-3-methyl-2-ketobutyrate (HMKB). In the reductase reaction, this 2-ketoacid undergoes a metal-dependent reduction by NADPH to yield (R)-2,3-dihydroxy-isovalerate. This chain is Ketol-acid reductoisomerase (NADP(+)), found in Clostridium botulinum (strain Eklund 17B / Type B).